The sequence spans 1377 residues: Zinc finger MYM-type protein 2 (1377 aa).

Glycyl lysine isopeptide (Lys-Gly) (interchain with G-Cter in SUMO2) cross-links involve residues K48, K88, K98, and K104. 2 stretches are compositionally biased toward polar residues: residues 85–115 and 127–138; these read TSSK…SVSE and TNQGQEKNSSNF. The tract at residues 85-177 is disordered; it reads TSSKNEELQG…GMGNSGITTE (93 aa). Over residues 139-152 the composition is skewed to basic and acidic residues; it reads IERRPPETKNRTND. Residue K147 forms a Glycyl lysine isopeptide (Lys-Gly) (interchain with G-Cter in SUMO2) linkage. A compositionally biased stretch (polar residues) spans 153–164; it reads VDFSTSSFSRSK. S159 is modified (phosphoserine). Residues K253 and K297 each participate in a glycyl lysine isopeptide (Lys-Gly) (interchain with G-Cter in SUMO2) cross-link. The tract at residues 273-305 is disordered; that stretch reads NGESATHHNPDSWISQSASFPRNQKQPGVDSLS. Polar residues predominate over residues 284 to 298; the sequence is SWISQSASFPRNQKQ. S305 is modified (phosphoserine). Glycyl lysine isopeptide (Lys-Gly) (interchain with G-Cter in SUMO2) cross-links involve residues K312, K325, K348, and K366. The MYM-type 1 zinc finger occupies 327–363; that stretch reads VKVTCANCKKPLQKGQTAYQRKGSAHLFCSTTCLSSF. Residues 369-409 form an MYM-type 2 zinc finger; that stretch reads PKKLCVMCKKDITTMKGTIVAQVDSSESFQEFCSTSCLSLY. Glycyl lysine isopeptide (Lys-Gly) (interchain with G-Cter in SUMO2) cross-links involve residues K417, K441, K491, K503, K513, K529, and K532. 2 consecutive MYM-type zinc fingers follow at residues 421-456 and 463-502; these read NKSR…FNRY and IMNC…VSEY. Residues 533–570 form an MYM-type 5 zinc finger; that stretch reads LTTCTGCRTQCRFFDMTQCIGPNGYMEPYCSTACMNSH. Glycyl lysine isopeptide (Lys-Gly) (interchain with G-Cter in SUMO2) cross-links involve residues K576, K603, K649, K658, K688, K700, and K709. An MYM-type 6 zinc finger spans residues 636–671; sequence QLKCNYCKNSFCSKPEILEWENKVHQFCSKTCSDDY. 2 MYM-type zinc fingers span residues 723 to 758 and 764 to 799; these read RCVT…CKKF and KAAR…LLRF. Residues K764, K788, K812, and K829 each participate in a glycyl lysine isopeptide (Lys-Gly) (interchain with G-Cter in SUMO2) cross-link. A phosphoserine mark is found at S838 and S958. Disordered regions lie at residues 983–1002 and 1028–1064; these read LLKN…PYEP and VFGE…SDNS. The segment covering 1039–1050 has biased composition (basic residues); sequence PRSKKKGAKRKA. S1064 bears the Phosphoserine mark. The residue at position 1376 (T1376) is a Phosphothreonine.

In terms of assembly, may be a component of a BHC histone deacetylase complex that contains HDAC1, HDAC2, HMG20B/BRAF35, KDM1A, RCOR1/CoREST, PHF21A/BHC80, ZNF198, ZNF217, ZMYM3, GSE1 and GTF2I.

It is found in the nucleus. Its function is as follows. May function as a transcription factor. This chain is Zinc finger MYM-type protein 2 (ZMYM2), found in Pongo abelii (Sumatran orangutan).